Here is a 221-residue protein sequence, read N- to C-terminus: tRNA (guanine-N(7)-)-methyltransferase (221 aa).

Positions 46, 71, and 120 each coordinate S-adenosyl-L-methionine. The active site involves Asp120. Asp156 contributes to the substrate binding site.

This sequence belongs to the class I-like SAM-binding methyltransferase superfamily. TrmB family.

The catalysed reaction is guanosine(46) in tRNA + S-adenosyl-L-methionine = N(7)-methylguanosine(46) in tRNA + S-adenosyl-L-homocysteine. The protein operates within tRNA modification; N(7)-methylguanine-tRNA biosynthesis. Functionally, catalyzes the formation of N(7)-methylguanine at position 46 (m7G46) in tRNA. The polypeptide is tRNA (guanine-N(7)-)-methyltransferase (Cytophaga hutchinsonii (strain ATCC 33406 / DSM 1761 / CIP 103989 / NBRC 15051 / NCIMB 9469 / D465)).